The sequence spans 427 residues: UDP-N-acetylglucosamine 1-carboxyvinyltransferase 1 (427 aa).

Lysine 23–asparagine 24 is a phosphoenolpyruvate binding site. Arginine 96 lines the UDP-N-acetyl-alpha-D-glucosamine pocket. The active-site Proton donor is the cysteine 120. Cysteine 120 carries the 2-(S-cysteinyl)pyruvic acid O-phosphothioketal modification. Residues arginine 125 to leucine 129, aspartate 309, and valine 331 contribute to the UDP-N-acetyl-alpha-D-glucosamine site.

Belongs to the EPSP synthase family. MurA subfamily.

Its subcellular location is the cytoplasm. It catalyses the reaction phosphoenolpyruvate + UDP-N-acetyl-alpha-D-glucosamine = UDP-N-acetyl-3-O-(1-carboxyvinyl)-alpha-D-glucosamine + phosphate. Its pathway is cell wall biogenesis; peptidoglycan biosynthesis. In terms of biological role, cell wall formation. Adds enolpyruvyl to UDP-N-acetylglucosamine. The protein is UDP-N-acetylglucosamine 1-carboxyvinyltransferase 1 of Streptococcus pneumoniae serotype 4 (strain ATCC BAA-334 / TIGR4).